Consider the following 229-residue polypeptide: ATP synthase subunit a (229 aa).

6 consecutive transmembrane segments (helical) span residues 25–45, 86–106, 111–131, 142–162, 181–201, and 202–222; these read ADAIAYTWLIIVCLLIVSLIA, IATLALFVLVSNLIGLIPGFF, NLNTTAACAVIVFLSTHIVGI, FMGPIWWLAPLMFFIEIIGHL, LVLMIFFALAPFLVPLPMMLM, and GVLVSFIQAFVFMLLAMIYIQ.

Belongs to the ATPase A chain family. In terms of assembly, F-type ATPases have 2 components, CF(1) - the catalytic core - and CF(0) - the membrane proton channel. CF(1) has five subunits: alpha(3), beta(3), gamma(1), delta(1), epsilon(1). CF(0) has three main subunits: a(1), b(2) and c(9-12). The alpha and beta chains form an alternating ring which encloses part of the gamma chain. CF(1) is attached to CF(0) by a central stalk formed by the gamma and epsilon chains, while a peripheral stalk is formed by the delta and b chains.

The protein resides in the cell inner membrane. Functionally, key component of the proton channel; it plays a direct role in the translocation of protons across the membrane. The polypeptide is ATP synthase subunit a (Geobacter sulfurreducens (strain ATCC 51573 / DSM 12127 / PCA)).